Reading from the N-terminus, the 844-residue chain is SWI/SNF-related matrix-associated actin-dependent regulator of chromatin subfamily A containing DEAD/H box 1 homolog (844 aa).

Over residues 1–23 (MSDSTVAASASASASSSAKSSLS) the composition is skewed to low complexity. Disordered regions lie at residues 1 to 75 (MSDS…TKLE) and 121 to 180 (NCKP…STKM). Residues 30-42 (INKNASSVVASPS) are compositionally biased toward polar residues. The 171-residue stretch at 301–471 (TVMHKQEMNG…ISLLCFVMPK (171 aa)) folds into the Helicase ATP-binding domain. Residue 314 to 321 (DEMGLGKT) coordinates ATP. The short motif at 422–425 (DEAH) is the DEGH box element. A Helicase C-terminal domain is found at 656 to 818 (YLDTLLPKLK…EQRCVVKLLT (163 aa)). 3 positions are modified to phosphoserine: serine 834, serine 838, and serine 841.

Belongs to the SNF2/RAD54 helicase family.

The protein localises to the nucleus. The enzyme catalyses ATP + H2O = ADP + phosphate + H(+). In terms of biological role, DNA helicase that possesses intrinsic ATP-dependent nucleosome-remodeling activity and is both required for DNA repair and heterochromatin organization. Promotes DNA end resection of double-strand breaks (DSBs) following DNA damage: probably acts by weakening histone DNA interactions in nucleosomes flanking DSBs. The sequence is that of SWI/SNF-related matrix-associated actin-dependent regulator of chromatin subfamily A containing DEAD/H box 1 homolog (Etl1) from Drosophila melanogaster (Fruit fly).